We begin with the raw amino-acid sequence, 104 residues long: Protein RnfH (104 aa).

It belongs to the UPF0125 (RnfH) family.

The polypeptide is Protein RnfH (Pseudomonas fluorescens (strain ATCC BAA-477 / NRRL B-23932 / Pf-5)).